We begin with the raw amino-acid sequence, 623 residues long: Protein skinhead-1 (623 aa).

Disordered regions lie at residues 1-29 (MGGS…FSSV), 158-184 (TEHP…YEYS), 421-451 (YQST…GSVT), and 467-557 (QRHS…LASD). Ser164 is modified (phosphoserine; by pmk-1). A compositionally biased stretch (polar residues) spans 173–184 (ERPTTSSRYEYS). The residue at position 430 (Ser430) is a Phosphoserine; by pmk-1. Composition is skewed to low complexity over residues 435–449 (GSSG…SPGS), 472–498 (SDCT…ESST), and 511–529 (PSSG…SQSS). The segment at 540–623 (SGQRKRGRQS…DRHDKMSHYI (84 aa)) is basic motif.

It belongs to the bZIP family. Skn1 subfamily. As to quaternary structure, monomer. Interacts with GATA factor elt-3; interaction may enhance transcriptional activation of target genes. In terms of assembly, interacts with pgma-5. Interacts with transcription factor mxl-3 (via N-terminus). Post-translationally, cleaved by the aspartic protease ddi-1. As to expression, postembryonic intestinal cells.

It localises to the nucleus. The protein localises to the cytoplasm. The protein resides in the mitochondrion. Functionally, transcription factor. Required to specify the fate of ventral blastomeres in the early embryo, and postembryonically for the development of the intestine. Directly regulates expression of zygotically expressed med-1 and med-2 to direct mesendoderm development. In response to oxidative stress and anoxia, required to up-regulate expression of stl-1 mRNA. Involved in regulating innate immunity, acting downstream of the pmk-1 p38/MAPK pathway and probably also downstream of nipi-3. Required for the up-regulation of phase II detoxification genes, including gcs-1 and several glutathione-S-transferase mRNAs in response to oxidative stress generated during pathogenic bacterial infection. Modulates oxidative stress responses in concert with transcription factors such as hcf-1 and elt-3. Regulates the transcription of genes associated with metabolism in response to changes in nutrient availability. In neurons, involved in mitochondrial fusion and behavioral recovery during reoxygenation. Required for riok-1 mRNA expression in the intestine. Downstream of the let-60/Ras, mek-2 and pmk-1 pathway, positively regulates lifespan probably by preventing transcription of insulin-like peptides such as ins-39. Prevents degeneration of dopaminergic CEP neurons in response to high Al(3+) or Mn(2+) levels, probably by promoting the expression of glutathione-S-transferase gst-1. Its function is as follows. Directed by the ER-associated degradation pathway (ERAD), mediates proteasomal homeostasis by regulating the expression of proteasomal subunits such as rpt-3 to confer resistance to proteasomal dysfunction. This chain is Protein skinhead-1 (skn-1), found in Caenorhabditis elegans.